Here is a 210-residue protein sequence, read N- to C-terminus: Thioredoxin-like 3-1, chloroplastic (210 aa).

Residues 81 to 210 form the Thioredoxin domain; it reads WRLKAFWSNI…EVRELINKFV (130 aa). Catalysis depends on nucleophile residues Cys-130 and Cys-133. The cysteines at positions 130 and 133 are disulfide-linked.

It belongs to the thioredoxin family.

The protein localises to the plastid. Its subcellular location is the chloroplast stroma. Functionally, probable thiol-disulfide oxidoreductase that may participate in various redox reactions. This is Thioredoxin-like 3-1, chloroplastic (WCRKC1) from Arabidopsis thaliana (Mouse-ear cress).